Consider the following 433-residue polypeptide: Pyrimidine-nucleoside phosphorylase (433 aa).

81 to 83 (KHS) lines the phosphate pocket. K(+)-binding residues include glycine 88 and threonine 90. Phosphate is bound by residues threonine 92, 108-110 (KMS), and threonine 120. Substrate-binding residues include arginine 168 and lysine 187. Leucine 243, alanine 246, and glutamate 255 together coordinate K(+).

The protein belongs to the thymidine/pyrimidine-nucleoside phosphorylase family. As to quaternary structure, homodimer. Requires K(+) as cofactor.

It catalyses the reaction uridine + phosphate = alpha-D-ribose 1-phosphate + uracil. The catalysed reaction is thymidine + phosphate = 2-deoxy-alpha-D-ribose 1-phosphate + thymine. The enzyme catalyses 2'-deoxyuridine + phosphate = 2-deoxy-alpha-D-ribose 1-phosphate + uracil. Catalyzes phosphorolysis of the pyrimidine nucleosides uridine, thymidine and 2'-deoxyuridine with the formation of the corresponding pyrimidine base and ribose-1-phosphate. The sequence is that of Pyrimidine-nucleoside phosphorylase (pdp) from Staphylococcus aureus (strain bovine RF122 / ET3-1).